The following is a 578-amino-acid chain: Proline--tRNA ligase (578 aa).

Belongs to the class-II aminoacyl-tRNA synthetase family. ProS type 1 subfamily. As to quaternary structure, homodimer.

It localises to the cytoplasm. The catalysed reaction is tRNA(Pro) + L-proline + ATP = L-prolyl-tRNA(Pro) + AMP + diphosphate. Catalyzes the attachment of proline to tRNA(Pro) in a two-step reaction: proline is first activated by ATP to form Pro-AMP and then transferred to the acceptor end of tRNA(Pro). As ProRS can inadvertently accommodate and process non-cognate amino acids such as alanine and cysteine, to avoid such errors it has two additional distinct editing activities against alanine. One activity is designated as 'pretransfer' editing and involves the tRNA(Pro)-independent hydrolysis of activated Ala-AMP. The other activity is designated 'posttransfer' editing and involves deacylation of mischarged Ala-tRNA(Pro). The misacylated Cys-tRNA(Pro) is not edited by ProRS. The sequence is that of Proline--tRNA ligase from Burkholderia ambifaria (strain ATCC BAA-244 / DSM 16087 / CCUG 44356 / LMG 19182 / AMMD) (Burkholderia cepacia (strain AMMD)).